A 391-amino-acid polypeptide reads, in one-letter code: O-methyltransferase ATR12 (391 aa).

Residues 233–234 (GG), aspartate 259, and 279–280 (DF) contribute to the S-adenosyl-L-methionine site. Histidine 299 serves as the catalytic Proton acceptor.

Belongs to the class I-like SAM-binding methyltransferase superfamily. Cation-independent O-methyltransferase family. COMT subfamily.

The protein operates within mycotoxin biosynthesis. Functionally, O-methyltransferase; part of the core atranone cluster (CAC) which products are predicted to catalyze most or all steps of mycotoxin atranone synthesis, starting from geranylgeranyl pyrophosphate (GGPP). The initial cyclization of GGPP to dolabellane is probably performed by the terpene cyclase ATR13. The Baeyer-Villiger oxidation near the end of the atranone synthesis, which converts atranones D and E to atranones F and G is predicted to be catalyzed by the monooxygenase ATR8. Of the CAC's other predicted gene products, the reducing PKS ATR6 might synthesize a polyketide chain. This polyketide is probably transferred onto the atranone backbone by the polyketide transferase ATR5. Other predicted CAC products include 4 oxygenases (ATR2, ATR3, ATR4, and ATR14), 3 short-chain reductases (ATR7, ATR9, and ATR10), and a methyltransferase (ATR12). These may all be involved in the various steps of atranone biosynthesis, although their specific roles must await experimental determination. The polypeptide is O-methyltransferase ATR12 (Stachybotrys chlorohalonatus (strain IBT 40285)).